The chain runs to 465 residues: Argininosuccinate lyase (465 aa).

Belongs to the lyase 1 family. Argininosuccinate lyase subfamily.

Its subcellular location is the cytoplasm. The catalysed reaction is 2-(N(omega)-L-arginino)succinate = fumarate + L-arginine. The protein operates within amino-acid biosynthesis; L-arginine biosynthesis; L-arginine from L-ornithine and carbamoyl phosphate: step 3/3. This chain is Argininosuccinate lyase, found in Deinococcus deserti (strain DSM 17065 / CIP 109153 / LMG 22923 / VCD115).